Here is a 197-residue protein sequence, read N- to C-terminus: Nucleoside triphosphate pyrophosphatase (197 aa).

Aspartate 71 serves as the catalytic Proton acceptor.

It belongs to the Maf family. Requires a divalent metal cation as cofactor.

The protein localises to the cytoplasm. The catalysed reaction is a ribonucleoside 5'-triphosphate + H2O = a ribonucleoside 5'-phosphate + diphosphate + H(+). It catalyses the reaction a 2'-deoxyribonucleoside 5'-triphosphate + H2O = a 2'-deoxyribonucleoside 5'-phosphate + diphosphate + H(+). In terms of biological role, nucleoside triphosphate pyrophosphatase. May have a dual role in cell division arrest and in preventing the incorporation of modified nucleotides into cellular nucleic acids. The polypeptide is Nucleoside triphosphate pyrophosphatase (Synechococcus sp. (strain JA-2-3B'a(2-13)) (Cyanobacteria bacterium Yellowstone B-Prime)).